The primary structure comprises 864 residues: Leucine--tRNA ligase (864 aa).

Positions 42-52 (PYPSGKLHMGH) match the 'HIGH' region motif. The short motif at 619 to 623 (KMSKS) is the 'KMSKS' region element. Lys622 is an ATP binding site.

The protein belongs to the class-I aminoacyl-tRNA synthetase family.

Its subcellular location is the cytoplasm. It carries out the reaction tRNA(Leu) + L-leucine + ATP = L-leucyl-tRNA(Leu) + AMP + diphosphate. In Wigglesworthia glossinidia brevipalpis, this protein is Leucine--tRNA ligase.